A 293-amino-acid polypeptide reads, in one-letter code: 4-hydroxy-tetrahydrodipicolinate synthase (293 aa).

Thr-46 serves as a coordination point for pyruvate. Catalysis depends on Tyr-134, which acts as the Proton donor/acceptor. The active-site Schiff-base intermediate with substrate is the Lys-162. Ile-204 serves as a coordination point for pyruvate.

This sequence belongs to the DapA family. In terms of assembly, homotetramer; dimer of dimers.

It localises to the cytoplasm. It carries out the reaction L-aspartate 4-semialdehyde + pyruvate = (2S,4S)-4-hydroxy-2,3,4,5-tetrahydrodipicolinate + H2O + H(+). Its pathway is amino-acid biosynthesis; L-lysine biosynthesis via DAP pathway; (S)-tetrahydrodipicolinate from L-aspartate: step 3/4. Its function is as follows. Catalyzes the condensation of (S)-aspartate-beta-semialdehyde [(S)-ASA] and pyruvate to 4-hydroxy-tetrahydrodipicolinate (HTPA). The protein is 4-hydroxy-tetrahydrodipicolinate synthase of Bdellovibrio bacteriovorus (strain ATCC 15356 / DSM 50701 / NCIMB 9529 / HD100).